Here is a 318-residue protein sequence, read N- to C-terminus: Taste receptor type 2 member 7 (318 aa).

Residues methionine 1–leucine 9 lie on the Extracellular side of the membrane. The chain crosses the membrane as a helical span at residues leucine 10–valine 30. The Cytoplasmic segment spans residues asparagine 31–arginine 55. The chain crosses the membrane as a helical span at residues isoleucine 56–tyrosine 76. Residues alanine 77–histidine 94 are Extracellular-facing. A helical membrane pass occupies residues leucine 95–phenylalanine 115. At histidine 116–arginine 128 the chain is on the cytoplasmic side. A helical transmembrane segment spans residues valine 129–threonine 149. Topologically, residues glutamate 150–asparagine 187 are extracellular. An N-linked (GlcNAc...) asparagine glycan is attached at asparagine 167. A helical transmembrane segment spans residues leucine 188–leucine 208. Residues tryptophan 209–lysine 235 lie on the Cytoplasmic side of the membrane. Residues alanine 236–serine 256 traverse the membrane as a helical segment. Residues serine 257–alanine 266 lie on the Extracellular side of the membrane. A helical membrane pass occupies residues valine 267–leucine 287. Topologically, residues glycine 288–isoleucine 318 are cytoplasmic.

Belongs to the G-protein coupled receptor T2R family.

The protein resides in the membrane. In terms of biological role, gustducin-coupled receptor implicated in the perception of bitter compounds in the oral cavity and the gastrointestinal tract. Signals through PLCB2 and the calcium-regulated cation channel TRPM5. In Macaca mulatta (Rhesus macaque), this protein is Taste receptor type 2 member 7 (TAS2R7).